A 503-amino-acid chain; its full sequence is Glucosaminyl-phosphatidylinositol-acyltransferase PIGW (503 aa).

Over 1–21 (MSQKQMKEAFVSNQNGTSVLE) the chain is Lumenal. N15 is a glycosylation site (N-linked (GlcNAc...) asparagine). Residues 22 to 42 (ITEGLCLPALCILCRGLLIIL) form a helical membrane-spanning segment. The Cytoplasmic segment spans residues 43–56 (SQQLCSSLHNSRTR). A helical transmembrane segment spans residues 57-75 (FLVDFAFLIVPLVTTLTIF). Over 76–78 (SSF) the chain is Lumenal. Residues 79–98 (VLLEYLVAIILGAGLLYEIY) form a helical membrane-spanning segment. Over 99-131 (CRRTCYARMPFQKICEKFLKVSLESEHIPAISC) the chain is Cytoplasmic. Residues 132–152 (FRVVNSAFTAVAILAVDFPLF) form a helical membrane-spanning segment. The Lumenal portion of the chain corresponds to 153-160 (PRRYAKTE). The helical transmembrane segment at 161 to 181 (LYGTGAMDYGVGGFIFGSAMV) threads the bilayer. At 182 to 201 (SPEVRRKYTKGSRFCYLTKS) the chain is on the cytoplasmic side. A helical transmembrane segment spans residues 202–222 (LYSLWPLVFLGVGRLVAIKSV). Residues 223-236 (DYQEHLTEYGVHWN) lie on the Lumenal side of the membrane. A helical transmembrane segment spans residues 237 to 257 (FFFTLIAVKLITSLLLLICPL). Residues 258 to 259 (NR) are Cytoplasmic-facing. Residues 260 to 280 (SWVVAISIAALYQLALDFTPL) form a helical membrane-spanning segment. At 281–304 (KSLILYGTDGSGTRVGLLNANREG) the chain is on the lumenal side. The helical transmembrane segment at 305–325 (IISVLGYVAVHMAGVQTGLYV) threads the bilayer. Over 326-337 (LKKRSHIKDWIK) the chain is Cytoplasmic. The chain crosses the membrane as a helical span at residues 338-358 (VACCILLTAIGLFISLYIVQV). The Lumenal portion of the chain corresponds to 359–369 (NVEVASRRMAN). Residues 370–390 (LAFCIWIVASCLILLSSLLLG) traverse the membrane as a helical segment. Topologically, residues 391 to 447 (DIILSFAKFVIKEAAVPCSWKLIQSPTANKKHLESIVFDAKRKEPTLCLITAMNRNQ) are cytoplasmic. S415 carries the post-translational modification Phosphoserine. Residues 448-468 (LLFFLLSNVTTGLVNLSIDTL) form a helical membrane-spanning segment. At 469 to 472 (HSST) the chain is on the lumenal side. A helical membrane pass occupies residues 473 to 493 (PWALCLLNLYMFTNCLIIYVL). Over 494 to 503 (HLQDKTIKFW) the chain is Cytoplasmic.

Belongs to the PIGW family.

The protein localises to the endoplasmic reticulum membrane. It functions in the pathway glycolipid biosynthesis; glycosylphosphatidylinositol-anchor biosynthesis. Its function is as follows. Acyltransferase that catalyzes the acyl transfer from an acyl-CoA at the 2-OH position of the inositol ring of glucosaminyl phosphatidylinositol (GlcN-PI) to generate glucosaminyl acyl phosphatidylinositol (GlcN-(acyl)PI) and participates in the fourth step of GPI-anchor biosynthesis. Required for the transport of GPI-anchored proteins to the plasma membrane. Acetylation during GPI-anchor biosynthesis is not essential for the subsequent mannosylation and is usually removed soon after the attachment of GPIs to proteins. This Bos taurus (Bovine) protein is Glucosaminyl-phosphatidylinositol-acyltransferase PIGW.